A 417-amino-acid polypeptide reads, in one-letter code: NADH-quinone oxidoreductase subunit D (417 aa).

It belongs to the complex I 49 kDa subunit family. In terms of assembly, NDH-1 is composed of 14 different subunits. Subunits NuoB, C, D, E, F, and G constitute the peripheral sector of the complex.

The protein resides in the cell inner membrane. The catalysed reaction is a quinone + NADH + 5 H(+)(in) = a quinol + NAD(+) + 4 H(+)(out). Its function is as follows. NDH-1 shuttles electrons from NADH, via FMN and iron-sulfur (Fe-S) centers, to quinones in the respiratory chain. The immediate electron acceptor for the enzyme in this species is believed to be ubiquinone. Couples the redox reaction to proton translocation (for every two electrons transferred, four hydrogen ions are translocated across the cytoplasmic membrane), and thus conserves the redox energy in a proton gradient. The sequence is that of NADH-quinone oxidoreductase subunit D from Burkholderia mallei (strain NCTC 10247).